Consider the following 27-residue polypeptide: Toxin TdII-4 (27 aa).

The 27-residue stretch at 1-27 folds into the LCN-type CS-alpha/beta domain; that stretch reads KDGYLMEPNGCKLGCLTRPAKYCWXEE.

Belongs to the long (4 C-C) scorpion toxin superfamily. Sodium channel inhibitor family. Beta subfamily. As to expression, expressed by the venom gland.

The protein resides in the secreted. Beta toxins bind voltage-independently at site-4 of sodium channels (Nav) and shift the voltage of activation toward more negative potentials thereby affecting sodium channel activation and promoting spontaneous and repetitive firing. This toxin is active against mammals and also affects neuromuscular preparations of frog. The chain is Toxin TdII-4 from Tityus discrepans (Venezuelan scorpion).